The following is a 251-amino-acid chain: Electron transfer flavoprotein subunit beta, mitochondrial (251 aa).

Belongs to the ETF beta-subunit/FixA family. In terms of assembly, heterodimer of an alpha and a beta subunit. FAD is required as a cofactor. Requires AMP as cofactor.

It localises to the mitochondrion matrix. Functionally, the electron transfer flavoprotein serves as a specific electron acceptor for several dehydrogenases, including five acyl-CoA dehydrogenases, glutaryl-CoA and sarcosine dehydrogenase. It transfers the electrons to the main mitochondrial respiratory chain via ETF-ubiquinone oxidoreductase (ETF dehydrogenase). Involved in leucine catabolism and in phytol degradation. In Arabidopsis thaliana (Mouse-ear cress), this protein is Electron transfer flavoprotein subunit beta, mitochondrial (ETFB).